The primary structure comprises 861 residues: ToMV resistance protein Tm-2(GCR236) (861 aa).

Positions 63–83 form a coiled coil; sequence VKNLLKDIQELAGDVEDLLDD. An NB-ARC domain is found at 162–388; that stretch reads DDFNMLQAKL…LESMGHKVQD (227 aa). Residue 185–192 participates in ATP binding; the sequence is GMPGLGKT. LRR repeat units lie at residues 225-248, 305-327, 388-411, 449-472, 510-536, 585-608, 609-631, 652-680, 689-710, 712-735, 736-758, 784-810, and 811-835; these read LDIA…NLRS, LHAL…IFNF, DGCA…CFLY, LAED…TYNG, VARL…KLEK, MTCL…IVKL, TRLE…VWES, ISSF…FFEP, LRKL…IFSP, LKAL…LSSY, PHIA…SFPP, LRKL…GYSF, and PQLE…DVSM.

This sequence belongs to the disease resistance NB-LRR family. As to quaternary structure, (Microbial infection) Interacts with tobamoviruses mouvement protein at the plasma membrane; this interaction triggers defense responses leading to programmed cell death. In terms of assembly, binds to HSP90 proteins; this interaction seems required for defense responses toward tobamoviruses.

It localises to the cell membrane. Its function is as follows. Inhibitor of viral mouvements which confers resistance to some tobamoviruses including tomato mosaic virus (ToMV) (e.g. isolates L, W3 and SL-1) and tobacco mosaic virus (TMV), but not to resistance-breaking isolates (e.g. B7, LT1, LII, Ltbl, ToMV2, and ToMV1-2) ToMV and tomato brown rugose fruit virus (ToBRFV). Elicits a hypersensitive reaction in response to avirulent (Avr) movement proteins from resistance inducing tobamoviruses (e.g. ToMV and TMV) strains, thus leading to programmed cell death. The polypeptide is ToMV resistance protein Tm-2(GCR236) (Solanum lycopersicum (Tomato)).